Reading from the N-terminus, the 602-residue chain is Glutamyl-tRNA(Gln) amidotransferase subunit B, mitochondrial (602 aa).

This sequence belongs to the GatB/GatE family. GatB subfamily. Subunit of the heterotrimeric GatCAB amidotransferase (AdT) complex, composed of A, B and C subunits.

It localises to the mitochondrion. It catalyses the reaction L-glutamyl-tRNA(Gln) + L-glutamine + ATP + H2O = L-glutaminyl-tRNA(Gln) + L-glutamate + ADP + phosphate + H(+). Allows the formation of correctly charged Gln-tRNA(Gln) through the transamidation of misacylated Glu-tRNA(Gln) in the mitochondria. The reaction takes place in the presence of glutamine and ATP through an activated gamma-phospho-Glu-tRNA(Gln). This is Glutamyl-tRNA(Gln) amidotransferase subunit B, mitochondrial from Paracoccidioides lutzii (strain ATCC MYA-826 / Pb01) (Paracoccidioides brasiliensis).